A 99-amino-acid chain; its full sequence is Large ribosomal subunit protein bL27 (99 aa).

The tract at residues 1–21 is disordered; sequence MAHKKGGGSTRNGRDSRAKRL.

It belongs to the bacterial ribosomal protein bL27 family.

The polypeptide is Large ribosomal subunit protein bL27 (Thermomicrobium roseum (strain ATCC 27502 / DSM 5159 / P-2)).